We begin with the raw amino-acid sequence, 92 residues long: MNRLLQRQLFLENLLVGVNSTFHQMQKHSINTCCRSLQRILDHLILLQTIHSPAFRLDRMQLRQMQTLACLWIHRRNHDLQATLDVINWISP.

It belongs to the rotavirus A NSP6 family. Interacts with NSP2 and NSP5.

The protein localises to the host cytoplasm. It is found in the host mitochondrion. This is Non-structural protein 6 from Rotavirus A (strain RVA/Human/Philippines/L26/1987/G12P1B[4]) (RV-A).